Consider the following 71-residue polypeptide: Small ribosomal subunit protein bS21 (71 aa).

Belongs to the bacterial ribosomal protein bS21 family.

In Chromohalobacter salexigens (strain ATCC BAA-138 / DSM 3043 / CIP 106854 / NCIMB 13768 / 1H11), this protein is Small ribosomal subunit protein bS21.